Here is a 269-residue protein sequence, read N- to C-terminus: tRNA pseudouridine synthase A (269 aa).

D51 serves as the catalytic Nucleophile. Substrate is bound at residue Y109.

The protein belongs to the tRNA pseudouridine synthase TruA family. As to quaternary structure, homodimer.

It carries out the reaction uridine(38/39/40) in tRNA = pseudouridine(38/39/40) in tRNA. Its function is as follows. Formation of pseudouridine at positions 38, 39 and 40 in the anticodon stem and loop of transfer RNAs. In Histophilus somni (strain 129Pt) (Haemophilus somnus), this protein is tRNA pseudouridine synthase A.